The chain runs to 482 residues: UDP-N-acetylmuramate--L-alanine ligase (482 aa).

The interval 1–26 (MPQLPMTDSAPLPTPAPSSPAQPSAQ) is disordered. 140 to 146 (GTHGKTT) contacts ATP.

This sequence belongs to the MurCDEF family.

It is found in the cytoplasm. The enzyme catalyses UDP-N-acetyl-alpha-D-muramate + L-alanine + ATP = UDP-N-acetyl-alpha-D-muramoyl-L-alanine + ADP + phosphate + H(+). It functions in the pathway cell wall biogenesis; peptidoglycan biosynthesis. Its function is as follows. Cell wall formation. The sequence is that of UDP-N-acetylmuramate--L-alanine ligase from Deinococcus radiodurans (strain ATCC 13939 / DSM 20539 / JCM 16871 / CCUG 27074 / LMG 4051 / NBRC 15346 / NCIMB 9279 / VKM B-1422 / R1).